Consider the following 346-residue polypeptide: Biotin synthase (346 aa).

The Radical SAM core domain maps to 38-256; the sequence is RQVQVSTLLS…IAVARIMMPT (219 aa). 3 residues coordinate [4Fe-4S] cluster: C53, C57, and C60. [2Fe-2S] cluster contacts are provided by C97, C128, C188, and R260.

It belongs to the radical SAM superfamily. Biotin synthase family. Homodimer. The cofactor is [4Fe-4S] cluster. [2Fe-2S] cluster is required as a cofactor.

It catalyses the reaction (4R,5S)-dethiobiotin + (sulfur carrier)-SH + 2 reduced [2Fe-2S]-[ferredoxin] + 2 S-adenosyl-L-methionine = (sulfur carrier)-H + biotin + 2 5'-deoxyadenosine + 2 L-methionine + 2 oxidized [2Fe-2S]-[ferredoxin]. The protein operates within cofactor biosynthesis; biotin biosynthesis; biotin from 7,8-diaminononanoate: step 2/2. Its function is as follows. Catalyzes the conversion of dethiobiotin (DTB) to biotin by the insertion of a sulfur atom into dethiobiotin via a radical-based mechanism. This is Biotin synthase from Pseudescherichia vulneris (Escherichia vulneris).